Reading from the N-terminus, the 519-residue chain is PTS system mannitol-specific EIICB component (519 aa).

Topologically, residues 1–30 (MAQTETQEKKGLGRKVQAFGSFLSSMIMPN) are cytoplasmic. One can recognise a PTS EIIC type-2 domain in the interval 19–351 (FGSFLSSMIM…MKFTKEPKQD (333 aa)). The helical transmembrane segment at 31-52 (IGAFIAWGFIAAIFIDNGWYPN) threads the bilayer. Residues 53 to 56 (KELS) lie on the Extracellular side of the membrane. Residues 57-77 (QLAGPMITYLIPLLIAFSGGR) traverse the membrane as a helical segment. Residues 78–141 (LIHDLRGGIV…QGFEMLFNNF (64 aa)) lie on the Cytoplasmic side of the membrane. The helical transmembrane segment at 142-163 (SAGILAFIMTILGFKLLAPIMQ) threads the bilayer. At 164–172 (FIMHILSVA) the chain is on the extracellular side. The helical transmembrane segment at 173-193 (VEFLVHLHLLPIVSIIVEPAK) threads the bilayer. Residues 194–280 (ILFLNNAINH…VLMRPLLFIA (87 aa)) are Cytoplasmic-facing. A helical membrane pass occupies residues 281 to 300 (VILGGMTGVATYQATGFGFK). The Extracellular segment spans residues 301-320 (SPASPGSFIVYCLNAPKGEF). The chain crosses the membrane as a helical span at residues 321 to 342 (LHMVLGVFLAALVSFVVAALIM). Over 343–519 (KFTKEPKQDL…NNLKKDQDKA (177 aa)) the chain is Cytoplasmic. The segment at 366–406 (KSSVSSKLTGATTGTGAAGVAANKANGEDQNEASSEDEEED) is disordered. Over residues 367-387 (SSVSSKLTGATTGTGAAGVAA) the composition is skewed to low complexity. The span at 394-406 (DQNEASSEDEEED) shows a compositional bias: acidic residues. Residues 425-519 (DHVIFACDAG…NNLKKDQDKA (95 aa)) enclose the PTS EIIB type-2 domain. Residue Cys-431 is the Phosphocysteine intermediate; for EIIB activity of the active site. Position 431 is a phosphocysteine; by EIIA (Cys-431).

As to quaternary structure, homodimer.

The protein resides in the cell membrane. It carries out the reaction D-mannitol(out) + N(pros)-phospho-L-histidyl-[protein] = D-mannitol 1-phosphate(in) + L-histidyl-[protein]. The phosphoenolpyruvate-dependent sugar phosphotransferase system (sugar PTS), a major carbohydrate active transport system, catalyzes the phosphorylation of incoming sugar substrates concomitantly with their translocation across the cell membrane. The enzyme II CmtAB PTS system is involved in D-mannitol transport. The sequence is that of PTS system mannitol-specific EIICB component (mtlA) from Staphylococcus haemolyticus (strain JCSC1435).